Consider the following 423-residue polypeptide: Protein CLP1 homolog (423 aa).

ATP contacts are provided by residues E16, K57, and 119–124 (DVGKST).

This sequence belongs to the Clp1 family. Clp1 subfamily.

The protein resides in the nucleus. In terms of biological role, required for endonucleolytic cleavage during polyadenylation-dependent pre-mRNA 3'-end formation. This is Protein CLP1 homolog (cbc) from Drosophila yakuba (Fruit fly).